Here is a 484-residue protein sequence, read N- to C-terminus: Putative myrosinase 6 (484 aa).

The N-linked (GlcNAc...) asparagine glycan is linked to asparagine 28. A beta-D-glucoside contacts are provided by residues glutamine 39, histidine 140, and 184–185; that span reads NQ. An intrachain disulfide couples cysteine 204 to cysteine 207. Residue asparagine 260 is glycosylated (N-linked (GlcNAc...) asparagine). A beta-D-glucoside contacts are provided by residues tyrosine 321, tryptophan 440, 447–448, and phenylalanine 456; that span reads EF. N-linked (GlcNAc...) asparagine glycosylation occurs at asparagine 462.

The protein belongs to the glycosyl hydrolase 1 family.

The enzyme catalyses a thioglucoside + H2O = a sugar + a thiol.. The chain is Putative myrosinase 6 from Arabidopsis thaliana (Mouse-ear cress).